Reading from the N-terminus, the 154-residue chain is MAVKIRLLRMGKIRNPQYRIVIADSRTKRDGRAIEFVGIYQPKHDPSVIEVKSDRVQYWLSVGAQPSEAVQRLLEKTGDWQKFKGLPAPEPLKVAPERVDRKAAYEAEAKAAAGLAEAPTKPAKKAAKAEAAPKTDEAAPKTEEQAGAGSGEQG.

Residues 111–121 are compositionally biased toward low complexity; it reads AAAGLAEAPTK. The segment at 111 to 154 is disordered; sequence AAAGLAEAPTKPAKKAAKAEAAPKTDEAAPKTEEQAGAGSGEQG. The span at 127 to 144 shows a compositional bias: basic and acidic residues; that stretch reads AKAEAAPKTDEAAPKTEE.

It belongs to the bacterial ribosomal protein bS16 family.

This Salinispora tropica (strain ATCC BAA-916 / DSM 44818 / JCM 13857 / NBRC 105044 / CNB-440) protein is Small ribosomal subunit protein bS16.